Consider the following 226-residue polypeptide: Pathogenesis-related protein R major form (226 aa).

Residues 1–25 (MNFLKSFPFFAFLYFGQYFVAVTHA) form the signal peptide. Disulfide bonds link Cys34-Cys225, Cys75-Cys85, Cys90-Cys96, Cys140-Cys214, Cys145-Cys197, Cys153-Cys163, Cys167-Cys176, and Cys177-Cys184.

Belongs to the thaumatin family.

It localises to the vacuole. This Nicotiana tabacum (Common tobacco) protein is Pathogenesis-related protein R major form.